Here is a 759-residue protein sequence, read N- to C-terminus: Short transient receptor potential channel 1 (759 aa).

Residues 1–30 form a disordered region; sequence MMAALYPSTDLSGASSSSLPSSPSSSSPNE. The Cytoplasmic segment spans residues 1 to 352; sequence MMAALYPSTD…GRIIHTPFMK (352 aa). Over residues 15 to 28 the composition is skewed to low complexity; the sequence is SSSSLPSSPSSSSP. ANK repeat units lie at residues 46–75, 83–112, and 124–153; these read LNEK…SGDL, LGRN…QKLM, and MDVA…SLPK. Residues 353-373 form a helical membrane-spanning segment; the sequence is FIIHGASYFTFLLLLNLYSLV. The Extracellular segment spans residues 374-381; it reads YNEDKKNT. A helical transmembrane segment spans residues 382 to 402; the sequence is MGPALERIDYLLILWIIGMIW. The Cytoplasmic portion of the chain corresponds to 403-461; it reads SDIKRLWYEGLEDFLEESRNQLSFVMNSLYLATFALKVVAHNKFHDFADRKDWDAFHPT. The helical transmembrane segment at 462-482 threads the bilayer; the sequence is LVAEGLFAFANVLSYLRLFFM. Topologically, residues 483 to 505 are extracellular; sequence YTTSSILGPLQISMGQMLQDFGK. The helical transmembrane segment at 506-526 threads the bilayer; sequence FLGMFLLVLFSFTIGLTQLYD. The Cytoplasmic portion of the chain corresponds to 527–552; that stretch reads KGYTPKEQKDCVGIFCEQQSNDTFHS. The chain crosses the membrane as a helical span at residues 553 to 573; sequence FIGTCFALFWYIFSLAHVAIF. The Extracellular portion of the chain corresponds to 574–582; that stretch reads VTRFSYGEE. A helical membrane pass occupies residues 583–603; the sequence is LQSFVGAVIVGTYNVVVVIVL. Residues 604-759 are Cytoplasmic-facing; the sequence is TKLLVAMLHK…SKYAMFYPRN (156 aa).

Belongs to the transient receptor (TC 1.A.4) family. STrpC subfamily. TRPC1 sub-subfamily. As to quaternary structure, homotetramer and heterotetramer with TRPC4 and/or TRPC5. Interacts with TRPC4 and TRPC5. Interacts with ITPR3. Interacts with MX1 and RNF24. Interacts with FKBP4. Interacts with TRPC4AP. Interacts with PLSCR1. Interacts with PKD2L2. Forms a heterotetramer with PKD2 with a 2:2 stoichiometry; has distinct channel properties separate from PKD2 or TRPC1 homomers alone. In terms of processing, activation of PRKCA induces phosphorylation of TRPC1 and subsequent Ca2+ entry into cells.

Its subcellular location is the cell membrane. It catalyses the reaction Ca(2+)(in) = Ca(2+)(out). Forms a receptor-activated non-selective calcium permeant cation channel. Probably is operated by a phosphatidylinositol second messenger system activated by receptor tyrosine kinases or G-protein coupled receptors. Also activated by intracellular calcium store depletion. This Oryctolagus cuniculus (Rabbit) protein is Short transient receptor potential channel 1 (TRPC1).